The chain runs to 239 residues: Phosphoribosylaminoimidazole-succinocarboxamide synthase (239 aa).

Belongs to the SAICAR synthetase family.

It carries out the reaction 5-amino-1-(5-phospho-D-ribosyl)imidazole-4-carboxylate + L-aspartate + ATP = (2S)-2-[5-amino-1-(5-phospho-beta-D-ribosyl)imidazole-4-carboxamido]succinate + ADP + phosphate + 2 H(+). It functions in the pathway purine metabolism; IMP biosynthesis via de novo pathway; 5-amino-1-(5-phospho-D-ribosyl)imidazole-4-carboxamide from 5-amino-1-(5-phospho-D-ribosyl)imidazole-4-carboxylate: step 1/2. In Shouchella clausii (strain KSM-K16) (Alkalihalobacillus clausii), this protein is Phosphoribosylaminoimidazole-succinocarboxamide synthase.